The primary structure comprises 166 residues: Small ribosomal subunit protein uS5 (166 aa).

The region spanning 11–74 is the S5 DRBM domain; that stretch reads LDDNVVAINR…EAAKKNLITV (64 aa).

This sequence belongs to the universal ribosomal protein uS5 family. Part of the 30S ribosomal subunit. Contacts proteins S4 and S8.

Its function is as follows. With S4 and S12 plays an important role in translational accuracy. Located at the back of the 30S subunit body where it stabilizes the conformation of the head with respect to the body. This is Small ribosomal subunit protein uS5 from Lactiplantibacillus plantarum (strain ATCC BAA-793 / NCIMB 8826 / WCFS1) (Lactobacillus plantarum).